Reading from the N-terminus, the 649-residue chain is Endoplasmic reticulum membrane protein 65 (649 aa).

The tract at residues methionine 1–valine 55 is disordered. The Cytoplasmic segment spans residues methionine 1–threonine 165. Positions asparagine 28–lysine 43 are enriched in basic and acidic residues. A Phosphoserine modification is found at serine 94. Residues phenylalanine 166–isoleucine 186 form a helical membrane-spanning segment. The Lumenal segment spans residues arginine 187–threonine 302. Asparagine 215 carries an N-linked (GlcNAc...) asparagine glycan. Residues phenylalanine 303–tyrosine 323 form a helical membrane-spanning segment. The Cytoplasmic segment spans residues glutamine 324–glutamine 366. The chain crosses the membrane as a helical span at residues leucine 367–leucine 387. Residues arginine 388–alanine 414 are Lumenal-facing. The chain crosses the membrane as a helical span at residues proline 415–isoleucine 435. The Cytoplasmic segment spans residues lysine 436–glycine 479. Residues leucine 480–phenylalanine 500 traverse the membrane as a helical segment. Residues arginine 501 to glycine 557 lie on the Lumenal side of the membrane. A helical membrane pass occupies residues isoleucine 558–alanine 578. Residues isoleucine 579–tryptophan 649 are Cytoplasmic-facing.

The protein belongs to the TAPT1 family. In terms of assembly, interacts with slp1.

Its subcellular location is the endoplasmic reticulum membrane. May be involved in membrane protein folding. The chain is Endoplasmic reticulum membrane protein 65 from Schizosaccharomyces pombe (strain 972 / ATCC 24843) (Fission yeast).